The sequence spans 136 residues: Keratin-associated protein 4-2 (136 aa).

20 tandem repeats follow at residues 5–9 (CCGSV), 20–24 (CCRPS), 25–29 (CCQTT), 30–34 (CCRTT), 35–39 (CCRPS), 40–44 (CCVSS), 45–49 (CCRPQ), 50–54 (CCQSV), 55–59 (CCQPT), 60–64 (CCSPS), 65–69 (CCQTT), 70–74 (CCRTT), 75–79 (CCRPS), 80–84 (CCVSS), 90–94 (CCQSV), 95–99 (YCQPT), 100–104 (CCRPS), 110–114 (CCRTT), 120–124 (CCVST), and 125–129 (CCRPT). The interval 5–129 (CCGSVCSDQG…CCVSTCCRPT (125 aa)) is 20 X 5 AA repeats OF C-C-[GRQVS]-[SPT]-[VSTQ].

This sequence belongs to the KRTAP type 4 family. As to quaternary structure, interacts with hair keratins.

In terms of biological role, in the hair cortex, hair keratin intermediate filaments are embedded in an interfilamentous matrix, consisting of hair keratin-associated proteins (KRTAP), which are essential for the formation of a rigid and resistant hair shaft through their extensive disulfide bond cross-linking with abundant cysteine residues of hair keratins. The matrix proteins include the high-sulfur and high-glycine-tyrosine keratins. In Homo sapiens (Human), this protein is Keratin-associated protein 4-2 (KRTAP4-2).